The primary structure comprises 198 residues: Protein GrpE (198 aa).

Residues 1–32 (MTTEKETATPADVEVASQEEQIDQTTEAQVEE) are disordered.

The protein belongs to the GrpE family. In terms of assembly, homodimer.

The protein localises to the cytoplasm. Functionally, participates actively in the response to hyperosmotic and heat shock by preventing the aggregation of stress-denatured proteins, in association with DnaK and GrpE. It is the nucleotide exchange factor for DnaK and may function as a thermosensor. Unfolded proteins bind initially to DnaJ; upon interaction with the DnaJ-bound protein, DnaK hydrolyzes its bound ATP, resulting in the formation of a stable complex. GrpE releases ADP from DnaK; ATP binding to DnaK triggers the release of the substrate protein, thus completing the reaction cycle. Several rounds of ATP-dependent interactions between DnaJ, DnaK and GrpE are required for fully efficient folding. This chain is Protein GrpE, found in Haemophilus ducreyi (strain 35000HP / ATCC 700724).